We begin with the raw amino-acid sequence, 724 residues long: Phenylalanine ammonia-lyase (724 aa).

The active-site Proton donor/acceptor is the Tyr91. The 5-imidazolinone (Ala-Gly) cross-link spans 205–207; sequence ASG. Ser206 bears the 2,3-didehydroalanine (Ser) mark. The (E)-cinnamate site is built by Asn265, Gln357, Arg363, Asn393, Lys467, Glu495, and Asn498.

This sequence belongs to the PAL/histidase family. Homotetramer. Post-translationally, contains an active site 4-methylidene-imidazol-5-one (MIO), which is formed autocatalytically by cyclization and dehydration of residues Ala-Ser-Gly.

The protein localises to the cytoplasm. It carries out the reaction L-phenylalanine = (E)-cinnamate + NH4(+). It participates in phenylpropanoid metabolism; trans-cinnamate biosynthesis; trans-cinnamate from L-phenylalanine: step 1/1. Functionally, catalyzes the non-oxidative deamination of L-phenylalanine to form trans-cinnamic acid and a free ammonium ion. Facilitates the commitment step in phenylpropanoid pathways that produce secondary metabolites such as lignins, coumarins and flavonoids. In Mycosarcoma maydis (Corn smut fungus), this protein is Phenylalanine ammonia-lyase (PAL1).